The chain runs to 404 residues: uncharacterized protein (404 aa).

This is an uncharacterized protein from Mycoplasma genitalium (strain ATCC 33530 / DSM 19775 / NCTC 10195 / G37) (Mycoplasmoides genitalium).